A 208-amino-acid polypeptide reads, in one-letter code: Receptor expression-enhancing protein 6 (208 aa).

The next 3 helical transmembrane spans lie at Gly-49–Tyr-69, Trp-93–Phe-113, and Phe-115–Gly-135. Residues Val-187–Asp-208 are disordered. Residues Leu-197–Asp-208 are compositionally biased toward polar residues.

This sequence belongs to the DP1 family.

The protein resides in the endoplasmic reticulum membrane. It localises to the cytoplasmic vesicle. The protein localises to the clathrin-coated vesicle membrane. Required correct function and survival of retinal photoreceptors. Required for retinal development. In rod photoreceptors, facilitates stability and/or trafficking of guanylate cyclases and is required to maintain endoplasmic reticulum and mitochondrial homeostasis. May play a role in clathrin-coated intracellular vesicle trafficking of proteins from the endoplasmic reticulum to the retinal rod plasma membrane. In Danio rerio (Zebrafish), this protein is Receptor expression-enhancing protein 6.